A 54-amino-acid polypeptide reads, in one-letter code: Large ribosomal subunit protein bL32 (54 aa).

This sequence belongs to the bacterial ribosomal protein bL32 family.

The protein is Large ribosomal subunit protein bL32 of Buchnera aphidicola subsp. Baizongia pistaciae (strain Bp).